The sequence spans 156 residues: 2-C-methyl-D-erythritol 2,4-cyclodiphosphate synthase (156 aa).

A divalent metal cation is bound by residues aspartate 9 and histidine 11. 4-CDP-2-C-methyl-D-erythritol 2-phosphate-binding positions include aspartate 9–histidine 11 and histidine 36–serine 37. A divalent metal cation is bound at residue histidine 44. Asparagine 58–glycine 60 lines the 4-CDP-2-C-methyl-D-erythritol 2-phosphate pocket.

The protein belongs to the IspF family. As to quaternary structure, homotrimer. The cofactor is a divalent metal cation.

The catalysed reaction is 4-CDP-2-C-methyl-D-erythritol 2-phosphate = 2-C-methyl-D-erythritol 2,4-cyclic diphosphate + CMP. The protein operates within isoprenoid biosynthesis; isopentenyl diphosphate biosynthesis via DXP pathway; isopentenyl diphosphate from 1-deoxy-D-xylulose 5-phosphate: step 4/6. Its function is as follows. Involved in the biosynthesis of isopentenyl diphosphate (IPP) and dimethylallyl diphosphate (DMAPP), two major building blocks of isoprenoid compounds. Catalyzes the conversion of 4-diphosphocytidyl-2-C-methyl-D-erythritol 2-phosphate (CDP-ME2P) to 2-C-methyl-D-erythritol 2,4-cyclodiphosphate (ME-CPP) with a corresponding release of cytidine 5-monophosphate (CMP). This chain is 2-C-methyl-D-erythritol 2,4-cyclodiphosphate synthase, found in Kosmotoga olearia (strain ATCC BAA-1733 / DSM 21960 / TBF 19.5.1).